The following is a 202-amino-acid chain: Small heat shock protein hspG5 (202 aa).

The region spanning 31–202 (KTIIDIIPPM…YSNTIKININ (172 aa)) is the sHSP domain. The disordered stretch occupies residues 96–138 (TSSTTLDSKEDEASIEEFEDDIKPKSKSTVTTTATKENKEDEN).

Belongs to the small heat shock protein (HSP20) family.

The chain is Small heat shock protein hspG5 (hspG5) from Dictyostelium discoideum (Social amoeba).